We begin with the raw amino-acid sequence, 268 residues long: Orotidine 5'-phosphate decarboxylase (268 aa).

Substrate is bound by residues Asp-39, 61-63 (KTH), 93-102 (DRKFADIGNT), Tyr-219, and Arg-237. Lys-95 (proton donor) is an active-site residue.

Belongs to the OMP decarboxylase family.

It carries out the reaction orotidine 5'-phosphate + H(+) = UMP + CO2. Its pathway is pyrimidine metabolism; UMP biosynthesis via de novo pathway; UMP from orotate: step 2/2. In Pachysolen tannophilus (Yeast), this protein is Orotidine 5'-phosphate decarboxylase (URA3).